The following is a 321-amino-acid chain: MTKYALVGDVGGTNARLALCDIASGEISQAKTYSGLDYPSLEAVVRVYLDEHSVNVEDGCIAIACPITGDWVAMTNHTWAFSIAEMKKNLGFSHLEIINDFTAVSMAIPMLKKEHLIQFGGGEPVDGKPIAVYGAGTGLGVAHLVHVDKRWISLPGEGGHVDFAPNSEEEAMILEILRAEIGHVSAERVLSGPGLVNLYRAIVKSDNRLPENLRPKDITERALADSCIDCRRALSLFCVIMGRFGGDLALTMGTFGGVYIAGGIVPRFLEFFKASGFRGGFEDKGRFKDYVHGIPVYLIVHDNPGLLGSGAHLRQTLGHIL.

8-13 (GDVGGT) serves as a coordination point for ATP.

This sequence belongs to the bacterial glucokinase family.

It localises to the cytoplasm. The enzyme catalyses D-glucose + ATP = D-glucose 6-phosphate + ADP + H(+). In Salmonella schwarzengrund (strain CVM19633), this protein is Glucokinase.